The primary structure comprises 248 residues: 4-hydroxy-tetrahydrodipicolinate reductase (248 aa).

NAD(+) contacts are provided by residues 9 to 14 (GARGKV), 77 to 79 (GTT), and 104 to 107 (APNF). His-134 functions as the Proton donor/acceptor in the catalytic mechanism. (S)-2,3,4,5-tetrahydrodipicolinate is bound at residue His-135. The Proton donor role is filled by Lys-138. 144 to 145 (GT) is a (S)-2,3,4,5-tetrahydrodipicolinate binding site.

The protein belongs to the DapB family.

It localises to the cytoplasm. It catalyses the reaction (S)-2,3,4,5-tetrahydrodipicolinate + NAD(+) + H2O = (2S,4S)-4-hydroxy-2,3,4,5-tetrahydrodipicolinate + NADH + H(+). The catalysed reaction is (S)-2,3,4,5-tetrahydrodipicolinate + NADP(+) + H2O = (2S,4S)-4-hydroxy-2,3,4,5-tetrahydrodipicolinate + NADPH + H(+). Its pathway is amino-acid biosynthesis; L-lysine biosynthesis via DAP pathway; (S)-tetrahydrodipicolinate from L-aspartate: step 4/4. In terms of biological role, catalyzes the conversion of 4-hydroxy-tetrahydrodipicolinate (HTPA) to tetrahydrodipicolinate. The polypeptide is 4-hydroxy-tetrahydrodipicolinate reductase (Nocardia farcinica (strain IFM 10152)).